Consider the following 493-residue polypeptide: MFS-type transporter efuF (493 aa).

A run of 11 helical transmembrane segments spans residues 90–110 (ITLVLFYVTFCLLDVPANMLL), 117–137 (IMLPTLMMGWGSMTLIQCAVH), 147–167 (LLMGAFEAGFMAGVVYYLTTF), 179–199 (IFYGAATIAGAFSGLLAYGVF), 211–231 (FLMIIEGSATILLASFAYWHL), 279–299 (IALYAVIGISYGVASASVGNF), 316–336 (LYTVAPYCVGCVILLAQCTSS), 343–363 (STHLAGAMLLTFVGFILLITL), 370–390 (GPTYFACFLLAAGAFTPSCIF), 406–426 (AVTGFMVGASNSGGIISSLAF), and 435–455 (IPALIVTATFQGVGIVLVLGF).

Belongs to the major facilitator superfamily.

It is found in the membrane. MFS-type transporter; part of the gene cluster that mediates the biosynthesis of enfumafungin, a glycosylated fernene-type triterpenoid with potent antifungal activity, mediated by its interaction with beta-1,3-glucan synthase and the fungal cell wall. Might facilitate the transport of glucose units to the subcellular site of enfumafungin biosynthesis. The chain is MFS-type transporter efuF from Hormonema carpetanum.